The sequence spans 310 residues: Isoflavone reductase homolog A622-like (310 aa).

NADP(+)-binding positions include 13–19 (GGTGYIG), Arg38, and Lys47. The Proton acceptor role is filled by Lys135. Arg139 provides a ligand contact to NADP(+).

The protein belongs to the NmrA-type oxidoreductase family. Isoflavone reductase subfamily. Monomer. In terms of tissue distribution, expressed in roots.

The protein localises to the cytoplasm. The protein operates within alkaloid biosynthesis; nicotine biosynthesis. Its function is as follows. Involved in the biosynthesis of pyridine alkaloid natural products, leading mainly to the production of anabasine, anatabine, nicotine and nornicotine, effective deterrents against herbivores with antiparasitic and pesticide properties (neurotoxins); nornicotine serves as the precursor in the synthesis of the carcinogen compound N'-nitrosonornicotine (NNN). Reductase that may be involved in a late step of tobacco alkaloid biosynthesis. Maybe involved in either the formation of a nicotinic acid-derived precursor or the final condensation reaction of tobacco alkaloids. The protein is Isoflavone reductase homolog A622-like of Nicotiana tabacum (Common tobacco).